Consider the following 599-residue polypeptide: Elongation factor 4 (599 aa).

A tr-type G domain is found at 4–185 (KNIRNFSIIA…VIIKKVPSPK (182 aa)). Residues 16–21 (DHGKST) and 132–135 (NKVD) contribute to the GTP site.

It belongs to the TRAFAC class translation factor GTPase superfamily. Classic translation factor GTPase family. LepA subfamily.

The protein localises to the cell membrane. The enzyme catalyses GTP + H2O = GDP + phosphate + H(+). Required for accurate and efficient protein synthesis under certain stress conditions. May act as a fidelity factor of the translation reaction, by catalyzing a one-codon backward translocation of tRNAs on improperly translocated ribosomes. Back-translocation proceeds from a post-translocation (POST) complex to a pre-translocation (PRE) complex, thus giving elongation factor G a second chance to translocate the tRNAs correctly. Binds to ribosomes in a GTP-dependent manner. This is Elongation factor 4 from Mycoplasmoides gallisepticum (strain R(low / passage 15 / clone 2)) (Mycoplasma gallisepticum).